The primary structure comprises 390 residues: MSAESLPSYSVRELNNAIGVLLERGFAPRFVIQATVSRPQVKKGHLWLTLSDGEASITAVAWASKLKQLDFVPADGDGVTVIGKLNFWSARASLAVQVLDMRPSLTTVLRRFETVKAQLLEEGVIDPSRHRKLPAYPNRLAVLTSVPSSALADMLRTAQDRWPLSELLVVPIPVQGEVAPIICGVLNRLAETHHQLGLDAIVIARGGGSREDLMVFDDAEVCRKLATFPLPVVTGLGHEDDLTVADLVADHRAATPTAAMVTLMPSRESAQQTITQRRSRLSEYKRWRLEQANSRLRDRHLLLDALRPEVTLQRRRDQWQQRQQLLRALSPQRWLNRGFAMLNTTNGQPIQSINDISLNEQLQILLKDGVIQAVAKTIQANETSNSKTSP.

It belongs to the XseA family. Heterooligomer composed of large and small subunits.

The protein resides in the cytoplasm. It catalyses the reaction Exonucleolytic cleavage in either 5'- to 3'- or 3'- to 5'-direction to yield nucleoside 5'-phosphates.. Bidirectionally degrades single-stranded DNA into large acid-insoluble oligonucleotides, which are then degraded further into small acid-soluble oligonucleotides. In Synechococcus sp. (strain CC9311), this protein is Exodeoxyribonuclease 7 large subunit.